Consider the following 269-residue polypeptide: Surfeit locus protein 4 (269 aa).

The next 5 membrane-spanning stretches (helical) occupy residues 64-84 (LLASSFVFLNLLGQLTGCILV), 92-112 (YACFGLFGIIALQTIAYSILW), 179-199 (FFSILQNIVGTALMILVAIGF), 203-223 (LAALTLVVWLFAINVYFNAFW), and 239-259 (FFQTMSVIGGLLLVVALGPGG). Residues 266–269 (KKEW) carry the Di-lysine motif motif.

It belongs to the SURF4 family. As to quaternary structure, found in a complex composed at least of SURF4, TMED2 and TMED10. May interact with LMAN1. Interacts with ZFYVE27 and with KIF5A in a ZFYVE27-dependent manner. Interacts with STING1. Interacts with SAR1B. Interacts with TMEM41B.

Its subcellular location is the endoplasmic reticulum membrane. The protein resides in the endoplasmic reticulum-Golgi intermediate compartment membrane. The protein localises to the golgi apparatus membrane. In terms of biological role, endoplasmic reticulum cargo receptor that mediates the export of lipoproteins by recruiting cargos into COPII vesicles to facilitate their secretion. Acts as a cargo receptor for lipoproteins bearing both APOB and APOA1, thereby regulating lipoprotein delivery and the maintenance of lipid homeostasis. Synergizes with the GTPase SAR1B to mediate transport of circulating lipoproteins. Promotes the secretion of PCSK9. Also mediates the efficient secretion of erythropoietin (EPO). May also play a role in the maintenance of the architecture of the endoplasmic reticulum-Golgi intermediate compartment and of the Golgi. The sequence is that of Surfeit locus protein 4 from Bos taurus (Bovine).